The following is a 395-amino-acid chain: MATEKVFFHVDIDAFFASVEQLDNPEYMGKPVIVGGQSERGVVSTCSYEARKFGVHSAMPILQARKLCPSGIFLRGRMDRYHEKSKEVMSIFKDFTPEIKQISVDEAFLNMTGMEKIFGTPKNSALLLKKTIKEETGLTVSVGCAQNKYIAKIASGRSKPDGLFIVKAGEEIDFMKSLPLKDVWGVGGKTRERLIAAGLTSVPQIFNSSEHLLQSILGNASGSFLFQAVRGELYDVFSDDVKSHSISTERTFEHDLFSHAEIDDVMFYLASELMYRIFDEKVKGKTVSVKIRYNDFTTVSVQSTGAVVNDTQDLFERARELFYKKFDNKTPIRLLGLCIMNIESDIPEAQTELFYSEKNVKKRKIEETMYTLTKKEGKNILKPARLLKKDKDGLE.

A UmuC domain is found at 7-187; the sequence is FFHVDIDAFF…LPLKDVWGVG (181 aa). Mg(2+) is bound by residues Asp-11 and Asp-105. Residue Glu-106 is part of the active site.

This sequence belongs to the DNA polymerase type-Y family. In terms of assembly, monomer. It depends on Mg(2+) as a cofactor.

The protein localises to the cytoplasm. It catalyses the reaction DNA(n) + a 2'-deoxyribonucleoside 5'-triphosphate = DNA(n+1) + diphosphate. Functionally, poorly processive, error-prone DNA polymerase involved in untargeted mutagenesis. Copies undamaged DNA at stalled replication forks, which arise in vivo from mismatched or misaligned primer ends. These misaligned primers can be extended by PolIV. Exhibits no 3'-5' exonuclease (proofreading) activity. May be involved in translesional synthesis, in conjunction with the beta clamp from PolIII. The chain is DNA polymerase IV from Treponema denticola (strain ATCC 35405 / DSM 14222 / CIP 103919 / JCM 8153 / KCTC 15104).